The primary structure comprises 463 residues: Phosphoglucosamine mutase (463 aa).

The active-site Phosphoserine intermediate is Ser110. 4 residues coordinate Mg(2+): Ser110, Asp255, Asp257, and Asp259. Position 110 is a phosphoserine (Ser110).

This sequence belongs to the phosphohexose mutase family. Mg(2+) serves as cofactor. Activated by phosphorylation.

The enzyme catalyses alpha-D-glucosamine 1-phosphate = D-glucosamine 6-phosphate. Its function is as follows. Catalyzes the conversion of glucosamine-6-phosphate to glucosamine-1-phosphate. This is Phosphoglucosamine mutase from Koribacter versatilis (strain Ellin345).